Reading from the N-terminus, the 321-residue chain is Thymidylate synthase (321 aa).

Residues 1 to 32 (MVLTPTKDGPDQESMPLPADNGESPSKQQAPV) form a disordered region. Phosphoserine is present on residues Ser24 and Ser26. At Tyr39 the chain carries Phosphotyrosine. DUMP is bound by residues Arg56 and 181 to 182 (RR). The active-site Nucleophile is the Cys201. Tyr208 is subject to Phosphotyrosine. Position 210 is a phosphoserine (Ser210). DUMP-binding positions include 223–226 (RSAD), Asn234, and 264–266 (HVY). A (6R)-5,10-methylene-5,6,7,8-tetrahydrofolate-binding site is contributed by Asp226. Ala320 contributes to the (6R)-5,10-methylene-5,6,7,8-tetrahydrofolate binding site.

Belongs to the thymidylate synthase family. In terms of assembly, homodimer.

The enzyme catalyses dUMP + (6R)-5,10-methylene-5,6,7,8-tetrahydrofolate = 7,8-dihydrofolate + dTMP. The protein operates within pyrimidine metabolism; dTTP biosynthesis. This is Thymidylate synthase (Ts) from Drosophila melanogaster (Fruit fly).